We begin with the raw amino-acid sequence, 482 residues long: NADH-quinone oxidoreductase subunit D (482 aa).

The segment covering 1–16 (MTTNTSTSSTTDDLTT) has biased composition (low complexity). The tract at residues 1–48 (MTTNTSTSSTTDDLTTGAPNGTGAPDGANGVGGPTGTVGGPGEHPAYE) is disordered. Residues 29 to 42 (NGVGGPTGTVGGPG) show a composition bias toward gly residues.

It belongs to the complex I 49 kDa subunit family. NDH-1 is composed of 14 different subunits. Subunits NuoB, C, D, E, F, and G constitute the peripheral sector of the complex.

The protein resides in the cell membrane. It catalyses the reaction a quinone + NADH + 5 H(+)(in) = a quinol + NAD(+) + 4 H(+)(out). Functionally, NDH-1 shuttles electrons from NADH, via FMN and iron-sulfur (Fe-S) centers, to quinones in the respiratory chain. The immediate electron acceptor for the enzyme in this species is believed to be a menaquinone. Couples the redox reaction to proton translocation (for every two electrons transferred, four hydrogen ions are translocated across the cytoplasmic membrane), and thus conserves the redox energy in a proton gradient. The protein is NADH-quinone oxidoreductase subunit D of Frankia casuarinae (strain DSM 45818 / CECT 9043 / HFP020203 / CcI3).